Consider the following 248-residue polypeptide: MDFTEKALVLRTGRFREADLWVRFLSPSRGVITAFAFGGCRSRRRFCGCLDALNHVLVKVSSDKRRTYLCLDEGTLLNGPVRLRSDWGRTGVAANCIKFVEAMGVGPEGAADAYDLTCGMLELLETADVVPEIFPVLFRGRLAFDQGYRIDPVRCARCGMRLKDVAGVRFLPREGVFECSAHGGASGGGFMMSAETLDAVRFVQENPPLMWTDIPLSPEGWKQWGRAVDAFIQYHVGLVWDKGRFRRI.

This sequence belongs to the RecO family.

Functionally, involved in DNA repair and RecF pathway recombination. In Oleidesulfovibrio alaskensis (strain ATCC BAA-1058 / DSM 17464 / G20) (Desulfovibrio alaskensis), this protein is DNA repair protein RecO.